We begin with the raw amino-acid sequence, 1055 residues long: Type I restriction enzyme HindI endonuclease subunit (1055 aa).

Residues 287–468 (TSEKGDRRIG…QDVFGRYVSI (182 aa)) form the Helicase ATP-binding domain.

Belongs to the HsdR family. The type I restriction/modification system is composed of three polypeptides R, M and S; the restriction enzyme has stoichiometry R(2)M(2)S(1) while the methyltransferase is M(2)S(1).

It catalyses the reaction Endonucleolytic cleavage of DNA to give random double-stranded fragments with terminal 5'-phosphates, ATP is simultaneously hydrolyzed.. Its function is as follows. The restriction (R) subunit of a type I restriction enzyme that recognizes 5'-RAACN(5)TAG-3' and cleaves a random distance away. Subunit R is required for both nuclease and ATPase activities, but not for modification. After locating a non-methylated recognition site, the enzyme complex serves as a molecular motor that translocates DNA in an ATP-dependent manner until a collision occurs that triggers cleavage. This chain is Type I restriction enzyme HindI endonuclease subunit, found in Haemophilus influenzae (strain ATCC 51907 / DSM 11121 / KW20 / Rd).